We begin with the raw amino-acid sequence, 794 residues long: Zinc finger protein 148 (794 aa).

Lysine 6 participates in a covalent cross-link: Glycyl lysine isopeptide (Lys-Gly) (interchain with G-Cter in SUMO2). The residue at position 51 (serine 51) is a Phosphoserine. Residues lysine 88, lysine 115, and lysine 132 each participate in a glycyl lysine isopeptide (Lys-Gly) (interchain with G-Cter in SUMO2) cross-link. The C2H2-type 1 zinc-finger motif lies at 171 to 193 (HVCEHCNAAFRTNYHLQRHVFIH). Phosphothreonine is present on threonine 194. 2 C2H2-type zinc fingers span residues 199–221 (FQCSQCDMRFIQKYLLQRHEKIH) and 227–249 (FRCDECGMRFIQKYHMERHKRTH). At serine 250 the chain carries Phosphoserine. Residues 255–278 (YQCEYCLQYFSRTDRVLKHKRMCH) form a C2H2-type 4 zinc finger. Residue lysine 291 forms a Glycyl lysine isopeptide (Lys-Gly) (interchain with G-Cter in SUMO2) linkage. The tract at residues 298–336 (EEDSGFSTSPKDNSLPKKKRQKTEKKSSGMDKESALDKS) is disordered. Phosphoserine is present on residues serine 301 and serine 306. A Glycyl lysine isopeptide (Lys-Gly) (interchain with G-Cter in SUMO2) cross-link involves residue lysine 308. A compositionally biased stretch (basic and acidic residues) spans 321–336 (EKKSSGMDKESALDKS). Lysine 356 is covalently cross-linked (Glycyl lysine isopeptide (Lys-Gly) (interchain with G-Cter in SUMO1); alternate). A Glycyl lysine isopeptide (Lys-Gly) (interchain with G-Cter in SUMO2); alternate cross-link involves residue lysine 356. A Glycyl lysine isopeptide (Lys-Gly) (interchain with G-Cter in SUMO2) cross-link involves residue lysine 402. Serine 412 carries the post-translational modification Phosphoserine. Glycyl lysine isopeptide (Lys-Gly) (interchain with G-Cter in SUMO2) cross-links involve residues lysine 421 and lysine 424. The span at 574–588 (NSSEVPEVTPSENVG) shows a compositional bias: polar residues. The interval 574-599 (NSSEVPEVTPSENVGSSSQASSSDKA) is disordered. The residue at position 607 (lysine 607) is an N6-acetyllysine. Phosphoserine occurs at positions 665 and 784.

This sequence belongs to the krueppel C2H2-type zinc-finger protein family. Interacts with HNRNPDL. Interacts with the 5FMC complex; the interaction requires association with CHTOP. Interacts with CAVIN1. In terms of processing, sumoylated with SUMO2. Desumoylated by SENP3, resulting in the stimulation of transcription of its target genes.

It localises to the nucleus. Involved in transcriptional regulation. Represses the transcription of a number of genes including gastrin, stromelysin and enolase. Binds to the G-rich box in the enhancer region of these genes. The chain is Zinc finger protein 148 (ZNF148) from Pongo abelii (Sumatran orangutan).